The following is a 427-amino-acid chain: Enolase (427 aa).

(2R)-2-phosphoglycerate is bound at residue Gln162. Residue Glu204 is the Proton donor of the active site. The Mg(2+) site is built by Asp241, Glu284, and Asp311. Residues Lys336, Arg365, Ser366, and Lys387 each contribute to the (2R)-2-phosphoglycerate site. The active-site Proton acceptor is Lys336.

Belongs to the enolase family. Mg(2+) serves as cofactor.

The protein resides in the cytoplasm. The protein localises to the secreted. Its subcellular location is the cell surface. It carries out the reaction (2R)-2-phosphoglycerate = phosphoenolpyruvate + H2O. It participates in carbohydrate degradation; glycolysis; pyruvate from D-glyceraldehyde 3-phosphate: step 4/5. In terms of biological role, catalyzes the reversible conversion of 2-phosphoglycerate (2-PG) into phosphoenolpyruvate (PEP). It is essential for the degradation of carbohydrates via glycolysis. This Natranaerobius thermophilus (strain ATCC BAA-1301 / DSM 18059 / JW/NM-WN-LF) protein is Enolase.